The primary structure comprises 376 residues: Glycerol-3-phosphate acyltransferase 9 (376 aa).

At 1 to 78 (MSSTAGRLVT…SNPPEPWNWN (78 aa)) the chain is on the cytoplasmic side. S13 carries the post-translational modification Phosphoserine. The next 3 membrane-spanning stretches (helical) occupy residues 79–99 (IYLF…LFPL), 102–122 (FTLA…NALL), and 135–155 (VLVE…VKYH). At 156 to 376 (GPRPSIRPKQ…ESILARLEEK (221 aa)) the chain is on the cytoplasmic side. The catalytic stretch occupies residues 168–180 (VANHTSMIDFIVL). An HXXXXD motif motif is present at residues 171–176 (HTSMID). 209–218 (GCIWFNRSEA) contacts sn-glycerol 3-phosphate. The interval 242–262 (IFPEGTCVNNNYTVMFKKGAF) is glycerol-3-phosphate binding. Residues 266-275 (CTVCPIAIKY) form a catalytic region. The interval 369-373 (ILARL) is endoplasmic reticulum targeting.

The protein belongs to the 1-acyl-sn-glycerol-3-phosphate acyltransferase family. As to quaternary structure, self-interacts. Interacts with LPAT2 and LPCAT2. Up-regulated during embryogenesis. Expressed in seedlings, leaves, stems, roots, floral buds, flowers, pollen, and siliques at various developmental stages.

Its subcellular location is the endoplasmic reticulum membrane. The enzyme catalyses sn-glycerol 3-phosphate + an acyl-CoA = a 1-acyl-sn-glycero-3-phosphate + CoA. It functions in the pathway glycerolipid metabolism; triacylglycerol biosynthesis. Functionally, essential protein. Required for male and female gametophytes development. Exhibits sn-1 acyltransferase activity with high specificity for acyl-coenzyme A, thus triggering storage lipid biosynthesis and playing an important role in the Kennedy pathway of glycerolipid biosynthesis. Catalyzes triacylglycerol (TAG) accumulation involved in membrane lipid and oil biosynthesis, especially in seeds. Also contributes to the biosynthesis of both polar lipids and TAG in developing leaves, as well as lipid droplet production in developing pollen grains. Seems to not contribute to surface lipid biosynthesis (e.g. waxes and cutin). The polypeptide is Glycerol-3-phosphate acyltransferase 9 (Arabidopsis thaliana (Mouse-ear cress)).